The chain runs to 457 residues: Argininosuccinate lyase (457 aa).

Belongs to the lyase 1 family. Argininosuccinate lyase subfamily.

The protein localises to the cytoplasm. It catalyses the reaction 2-(N(omega)-L-arginino)succinate = fumarate + L-arginine. It functions in the pathway amino-acid biosynthesis; L-arginine biosynthesis; L-arginine from L-ornithine and carbamoyl phosphate: step 3/3. In Pectobacterium carotovorum subsp. carotovorum (strain PC1), this protein is Argininosuccinate lyase.